The following is a 101-amino-acid chain: NAD(P)H-quinone oxidoreductase subunit 4L, chloroplastic (101 aa).

Transmembrane regions (helical) follow at residues Ile-2–Ile-22, Met-32–Ile-52, and Ile-64–Ile-84.

Belongs to the complex I subunit 4L family. NDH is composed of at least 16 different subunits, 5 of which are encoded in the nucleus.

The protein localises to the plastid. It localises to the chloroplast thylakoid membrane. The catalysed reaction is a plastoquinone + NADH + (n+1) H(+)(in) = a plastoquinol + NAD(+) + n H(+)(out). It carries out the reaction a plastoquinone + NADPH + (n+1) H(+)(in) = a plastoquinol + NADP(+) + n H(+)(out). Functionally, NDH shuttles electrons from NAD(P)H:plastoquinone, via FMN and iron-sulfur (Fe-S) centers, to quinones in the photosynthetic chain and possibly in a chloroplast respiratory chain. The immediate electron acceptor for the enzyme in this species is believed to be plastoquinone. Couples the redox reaction to proton translocation, and thus conserves the redox energy in a proton gradient. This is NAD(P)H-quinone oxidoreductase subunit 4L, chloroplastic from Chlorokybus atmophyticus (Soil alga).